Reading from the N-terminus, the 283-residue chain is Lysozyme-like protein 7 (283 aa).

The signal sequence occupies residues 1-18 (MAHKSIVIFSVLAVLCHS). One can recognise a Ch-type lysozyme domain in the interval 53–273 (YAYALDIYVQ…AVEEDGKIYA (221 aa)).

The protein belongs to the glycosyl hydrolase 25 family. Expressed in intestine. Expressed in rectal gland cells and head neurons.

Plays a role in resistance to Gram-positive bacteria B.thuringiensis and M.nematophilum and Gram-negative bacteria S.boydii or S.flexneri infection and to fungus C.neoformans infection. Plays a role in susceptibility to Gram-negative bacterium S.typhimurium infection. In Caenorhabditis elegans, this protein is Lysozyme-like protein 7.